A 539-amino-acid chain; its full sequence is Probable malate:quinone oxidoreductase (539 aa).

Belongs to the MQO family. FAD serves as cofactor.

It catalyses the reaction (S)-malate + a quinone = a quinol + oxaloacetate. It participates in carbohydrate metabolism; tricarboxylic acid cycle; oxaloacetate from (S)-malate (quinone route): step 1/1. This Sodalis glossinidius (strain morsitans) protein is Probable malate:quinone oxidoreductase.